A 283-amino-acid chain; its full sequence is Phosphatidylglycerol--prolipoprotein diacylglyceryl transferase (283 aa).

4 helical membrane-spanning segments follow: residues 17–37 (LAVRWYALSYILGFILFTFLG), 56–76 (FLTWGILGVILGGRLGYVLFY), 92–112 (WEGGMSFHGGFLGVVIAIWLF), and 117–137 (GIGFLKLMDTVAPLVPLGLAS). Residue Arg139 coordinates a 1,2-diacyl-sn-glycero-3-phospho-(1'-sn-glycerol). 3 helical membrane passes run 194–214 (PSQLYQFALEGICLFAVVWLF), 222–242 (GQVASLFLGGYGIFRFIAEFA), and 255–275 (GLSMGQWLSVPMIVLGIVGFV).

Belongs to the Lgt family.

The protein localises to the cell inner membrane. It carries out the reaction L-cysteinyl-[prolipoprotein] + a 1,2-diacyl-sn-glycero-3-phospho-(1'-sn-glycerol) = an S-1,2-diacyl-sn-glyceryl-L-cysteinyl-[prolipoprotein] + sn-glycerol 1-phosphate + H(+). It participates in protein modification; lipoprotein biosynthesis (diacylglyceryl transfer). Functionally, catalyzes the transfer of the diacylglyceryl group from phosphatidylglycerol to the sulfhydryl group of the N-terminal cysteine of a prolipoprotein, the first step in the formation of mature lipoproteins. In Neisseria meningitidis serogroup A / serotype 4A (strain DSM 15465 / Z2491), this protein is Phosphatidylglycerol--prolipoprotein diacylglyceryl transferase.